A 293-amino-acid polypeptide reads, in one-letter code: Probable adenylate kinase 1, chloroplastic (293 aa).

A mitochondrion-targeting transit peptide spans 1-26; the sequence is MAAVQRLLRASASGGAAAAAAAARRR. 70–75 is a binding site for ATP; that stretch reads GVGKGT. The segment at 90–119 is NMP; it reads ATGDLVRDELASSGPLSVQLAEIVNQGKLV. AMP is bound by residues Thr91, Arg96, 117–119, 147–150, and Gln154; these read KLV and GFPR. Positions 183–231 are LID; sequence GRRICGQCGKNFNLACIDVKGENGLPPIYMAPLLPPNNCMSKLITRADD. Residues Arg184 and 193 to 194 contribute to the ATP site; that span reads NF. 2 residues coordinate AMP: Arg228 and Arg239.

This sequence belongs to the adenylate kinase family.

It localises to the mitochondrion. It carries out the reaction AMP + ATP = 2 ADP. In terms of biological role, catalyzes the reversible transfer of the terminal phosphate group between ATP and AMP. Plays an important role in cellular energy homeostasis and in adenine nucleotide metabolism. The polypeptide is Probable adenylate kinase 1, chloroplastic (Oryza sativa subsp. japonica (Rice)).